Consider the following 743-residue polypeptide: Catalase-peroxidase (743 aa).

Residues 1–21 are disordered; the sequence is MSENHETVVSELNEESGGGCP. The segment at residues 108–231 is a cross-link (tryptophyl-tyrosyl-methioninium (Trp-Tyr) (with M-257)); sequence WHSAGTYRIS…LGAVQMGLIY (124 aa). Catalysis depends on histidine 109, which acts as the Proton acceptor. Positions 231-257 form a cross-link, tryptophyl-tyrosyl-methioninium (Tyr-Met) (with W-108); it reads YVNPEGPNGTPDPLAAARDIRETFRRM. Histidine 272 contributes to the heme b binding site. A disordered region spans residues 275-296; the sequence is GKTHGAGDPDNVGPEPEGAPLE.

Belongs to the peroxidase family. Peroxidase/catalase subfamily. Homodimer or homotetramer. The cofactor is heme b. Post-translationally, formation of the three residue Trp-Tyr-Met cross-link is important for the catalase, but not the peroxidase activity of the enzyme.

The catalysed reaction is H2O2 + AH2 = A + 2 H2O. The enzyme catalyses 2 H2O2 = O2 + 2 H2O. Functionally, bifunctional enzyme with both catalase and broad-spectrum peroxidase activity. The chain is Catalase-peroxidase from Parafrankia sp. (strain EAN1pec).